The chain runs to 165 residues: Xanthine-guanine phosphoribosyltransferase (165 aa).

5-phospho-alpha-D-ribose 1-diphosphate-binding positions include 41–42 and 98–106; these read RG and DDLTDTGKT. Mg(2+) is bound at residue Asp-99. 2 residues coordinate guanine: Asp-102 and Ile-145. Xanthine contacts are provided by Asp-102 and Ile-145. Residues 102-106 and 144-145 contribute to the GMP site; these read DTGKT and WI.

Belongs to the purine/pyrimidine phosphoribosyltransferase family. XGPT subfamily. In terms of assembly, homotetramer. The cofactor is Mg(2+).

It is found in the cell inner membrane. It carries out the reaction GMP + diphosphate = guanine + 5-phospho-alpha-D-ribose 1-diphosphate. It catalyses the reaction XMP + diphosphate = xanthine + 5-phospho-alpha-D-ribose 1-diphosphate. The enzyme catalyses IMP + diphosphate = hypoxanthine + 5-phospho-alpha-D-ribose 1-diphosphate. It participates in purine metabolism; GMP biosynthesis via salvage pathway; GMP from guanine: step 1/1. It functions in the pathway purine metabolism; XMP biosynthesis via salvage pathway; XMP from xanthine: step 1/1. In terms of biological role, purine salvage pathway enzyme that catalyzes the transfer of the ribosyl-5-phosphate group from 5-phospho-alpha-D-ribose 1-diphosphate (PRPP) to the N9 position of the 6-oxopurines guanine and xanthine to form the corresponding ribonucleotides GMP (guanosine 5'-monophosphate) and XMP (xanthosine 5'-monophosphate), with the release of PPi. To a lesser extent, also acts on hypoxanthine. The sequence is that of Xanthine-guanine phosphoribosyltransferase from Sinorhizobium medicae (strain WSM419) (Ensifer medicae).